Here is a 137-residue protein sequence, read N- to C-terminus: Protein cornichon homolog 4 (137 aa).

The next 3 helical transmembrane spans lie at 8-28 (LISF…LVCL), 53-73 (FIVQ…FMTL), and 113-133 (LAYI…SALD).

It belongs to the cornichon family.

The protein localises to the membrane. The chain is Protein cornichon homolog 4 from Arabidopsis thaliana (Mouse-ear cress).